The primary structure comprises 150 residues: Profilin (150 aa).

This sequence belongs to the profilin family. In terms of assembly, occurs in many kinds of cells as a complex with monomeric actin in a 1:1 ratio.

The protein resides in the cytoplasm. It is found in the cytoskeleton. In terms of biological role, binds to actin and affects the structure of the cytoskeleton. At high concentrations, profilin prevents the polymerization of actin, whereas it enhances it at low concentrations. By binding to PIP2, it inhibits the formation of IP3 and DG. The sequence is that of Profilin from Trypanosoma brucei brucei.